The chain runs to 612 residues: Protein NorD (612 aa).

The interval 220-246 is disordered; sequence EGEGDLETPPSGQSRQRNGARRVDDSS. Positions 420–609 constitute a VWFA domain; it reads DLACLLLADL…FPPAAAVQAT (190 aa).

In terms of biological role, component of the anaerobic respiratory chain that transforms nitrate to dinitrogen (denitrification). This is Protein NorD (norD) from Stutzerimonas stutzeri (Pseudomonas stutzeri).